Here is a 333-residue protein sequence, read N- to C-terminus: Probable tRNA-dihydrouridine synthase 1 (333 aa).

FMN-binding positions include 17–19 (PMA) and Gln71. The active-site Proton donor is Cys102. FMN is bound by residues Lys141, 202–204 (NGD), and 226–227 (GR).

Belongs to the Dus family. FMN is required as a cofactor.

It catalyses the reaction a 5,6-dihydrouridine in tRNA + NAD(+) = a uridine in tRNA + NADH + H(+). The catalysed reaction is a 5,6-dihydrouridine in tRNA + NADP(+) = a uridine in tRNA + NADPH + H(+). Catalyzes the synthesis of 5,6-dihydrouridine (D), a modified base found in the D-loop of most tRNAs, via the reduction of the C5-C6 double bond in target uridines. This is Probable tRNA-dihydrouridine synthase 1 (dus1) from Bacillus subtilis (strain 168).